The chain runs to 155 residues: uncharacterized protein (155 aa).

The disordered stretch occupies residues 1–34 (MESLQTPQHRENQDKREKEYGVKHMPMGNNAGNL). The segment covering 8–22 (QHRENQDKREKEYGV) has biased composition (basic and acidic residues). The helical transmembrane segment at 115–135 (MSLLLLPAFSGLTWAPFLFLF) threads the bilayer.

It localises to the membrane. This is an uncharacterized protein from Homo sapiens (Human).